The chain runs to 327 residues: NF-kappa-B inhibitor delta (327 aa).

The segment at 1 to 40 is disordered; it reads MEDSLDTRLYPEPSLSQVGSWRVSSLPSGSPQLPSPTGPS. The segment covering 14 to 23 has biased composition (polar residues); sequence SLSQVGSWRV. 6 ANK repeats span residues 62–97, 98–127, 131–160, 166–215, 220–250, and 257–290; these read EGDT…IREH, KGKT…EPNA, QGRS…QVDL, EGLT…SHTS, SNKT…DLRA, and HGNT…DPTL. Residues 293-327 form a disordered region; the sequence is LENEQPVHLLRPGPGPEGLRQLLKRSRTAPPGLSS.

It belongs to the NF-kappa-B inhibitor family. In terms of assembly, interacts with NFKB1, RELA and RELB; in the nucleus. In terms of tissue distribution, specifically expressed in spleen and at low levels in thymus. Expressed in a population of antigen-presenting dendritic cells which may act as regulators of systemic inflammatory response.

The protein localises to the nucleus. Regulates the expression of IL-2, IL-6, and other cytokines through regulation on NF-kappa-B activity. Functions in the regulation of inflammatory responses. Involved in the induction of T helper 17 cells (Th17) differentiation upon recognition of antigen by T cell antigen receptor (TCR). According to PubMed:11931770, it may also regulate TCR-induced negative selection of thymocytes. The polypeptide is NF-kappa-B inhibitor delta (Nfkbid) (Mus musculus (Mouse)).